A 450-amino-acid chain; its full sequence is CBL-interacting protein kinase 23 (450 aa).

The 256-residue stretch at 13–268 (YELGRTLGEG…IAELINNEWF (256 aa)) folds into the Protein kinase domain. Residues 19–27 (LGEGTFAKV) and Lys42 each bind ATP. Asp136 acts as the Proton acceptor in catalysis. The interval 154–183 (DFGLSALSQQVREDGLLHTTCGTPNYVAPE) is activation loop. The NAF domain occupies 306–331 (EERPSVMNAFELISTSQGLNLGTLFE). A PPI region spans residues 339–368 (KRETRFASRLPANEILSKIEAAAGPMGFNV).

The protein belongs to the protein kinase superfamily. CAMK Ser/Thr protein kinase family. SNF1 subfamily. Mn(2+) is required as a cofactor.

It carries out the reaction L-seryl-[protein] + ATP = O-phospho-L-seryl-[protein] + ADP + H(+). It catalyses the reaction L-threonyl-[protein] + ATP = O-phospho-L-threonyl-[protein] + ADP + H(+). Functionally, CIPK serine-threonine protein kinases interact with CBL proteins. Binding of a CBL protein to the regulatory NAF domain of CIPK protein lead to the activation of the kinase in a calcium-dependent manner. The chain is CBL-interacting protein kinase 23 (CIPK23) from Oryza sativa subsp. japonica (Rice).